The chain runs to 386 residues: Succinate--CoA ligase [ADP-forming] subunit beta (386 aa).

The ATP-grasp domain occupies 9–244 (KAVLRSYGVS…LDEEDAKEIE (236 aa)). ATP is bound by residues lysine 46, 53 to 55 (GRG), glutamate 99, cysteine 102, and glutamate 107. Residues asparagine 199 and aspartate 213 each coordinate Mg(2+). Substrate contacts are provided by residues asparagine 264 and 321-323 (GIM).

The protein belongs to the succinate/malate CoA ligase beta subunit family. As to quaternary structure, heterotetramer of two alpha and two beta subunits. Mg(2+) serves as cofactor.

The catalysed reaction is succinate + ATP + CoA = succinyl-CoA + ADP + phosphate. It carries out the reaction GTP + succinate + CoA = succinyl-CoA + GDP + phosphate. Its pathway is carbohydrate metabolism; tricarboxylic acid cycle; succinate from succinyl-CoA (ligase route): step 1/1. Functionally, succinyl-CoA synthetase functions in the citric acid cycle (TCA), coupling the hydrolysis of succinyl-CoA to the synthesis of either ATP or GTP and thus represents the only step of substrate-level phosphorylation in the TCA. The beta subunit provides nucleotide specificity of the enzyme and binds the substrate succinate, while the binding sites for coenzyme A and phosphate are found in the alpha subunit. This chain is Succinate--CoA ligase [ADP-forming] subunit beta, found in Bacillus anthracis (strain A0248).